An 843-amino-acid chain; its full sequence is Protein P (843 aa).

Residues 1 to 177 form a terminal protein domain (TP) region; that stretch reads MPLSYPHFRK…FCGSPYSWEQ (177 aa). The interval 178–346 is spacer; the sequence is ELQHGSTSIN…YCLSHIINLL (169 aa). Disordered stretches follow at residues 202-221 and 285-310; these read SGIL…FQQS and TNPS…VPPG. The interval 347 to 690 is polymerase/reverse transcriptase domain (RT); it reads EDWGPCYEHG…YMNLYPVARQ (344 aa). One can recognise a Reverse transcriptase domain in the interval 357–600; it reads QHHIRTPRTP…YTLNFMGYVI (244 aa). Mg(2+)-binding residues include D429, D551, and D552.

The protein belongs to the hepadnaviridae P protein family.

It carries out the reaction DNA(n) + a 2'-deoxyribonucleoside 5'-triphosphate = DNA(n+1) + diphosphate. The enzyme catalyses Endonucleolytic cleavage to 5'-phosphomonoester.. Activated by host HSP70 and HSP40 in vitro to be able to bind the epsilon loop of the pgRNA. Because deletion of the RNase H region renders the protein partly chaperone-independent, the chaperones may be needed indirectly to relieve occlusion of the RNA-binding site by this domain. Inhibited by several reverse-transcriptase inhibitors: Lamivudine, Adefovir and Entecavir. Its function is as follows. Multifunctional enzyme that converts the viral RNA genome into dsDNA in viral cytoplasmic capsids. This enzyme displays a DNA polymerase activity that can copy either DNA or RNA templates, and a ribonuclease H (RNase H) activity that cleaves the RNA strand of RNA-DNA heteroduplexes in a partially processive 3'- to 5'-endonucleasic mode. Neo-synthesized pregenomic RNA (pgRNA) are encapsidated together with the P protein, and reverse-transcribed inside the nucleocapsid. Initiation of reverse-transcription occurs first by binding the epsilon loop on the pgRNA genome, and is initiated by protein priming, thereby the 5'-end of (-)DNA is covalently linked to P protein. Partial (+)DNA is synthesized from the (-)DNA template and generates the relaxed circular DNA (RC-DNA) genome. After budding and infection, the RC-DNA migrates in the nucleus, and is converted into a plasmid-like covalently closed circular DNA (cccDNA). The activity of P protein does not seem to be necessary for cccDNA generation, and is presumably released from (+)DNA by host nuclear DNA repair machinery. This is Protein P from Hepatitis B virus genotype F1 (isolate Argentina/sa11/2000) (HBV-F).